The primary structure comprises 321 residues: uncharacterized protein (321 aa).

The Cytoplasmic portion of the chain corresponds to 1 to 5; it reads MKQQA. The chain crosses the membrane as a helical span at residues 6 to 26; that stretch reads GIGILLALTTAICWGALPIAM. One can recognise an EamA 1 domain in the interval 17–144; the sequence is ICWGALPIAM…LLSGLVMFFN (128 aa). The Periplasmic segment spans residues 27–35; it reads KQVLEVMEP. Residues 36–56 form a helical membrane-spanning segment; the sequence is PTIVFYRFLMASIGLGAILAV. The Cytoplasmic portion of the chain corresponds to 57-70; that stretch reads KKRLPPLRVFRKPR. A helical transmembrane segment spans residues 71–91; it reads WLILLAVATAGLFGNFILFSS. Over 92–99 the chain is Periplasmic; it reads SLQYLSPT. A helical membrane pass occupies residues 100–120; that stretch reads ASQVIGQLSPVGMMVASVFIL. Residues 121–130 lie on the Cytoplasmic side of the membrane; that stretch reads KEKMRSTQVV. Residues 131–151 traverse the membrane as a helical segment; sequence GALMLLSGLVMFFNTSLVEIF. The Periplasmic segment spans residues 152 to 156; that stretch reads TKLTD. Residues 157–177 form a helical membrane-spanning segment; it reads YTWGVIFGVGAATVWVSYGVA. The EamA 2 domain occupies 169–292; that stretch reads TVWVSYGVAQ…GYLGAFVVVA (124 aa). Over 178-190 the chain is Cytoplasmic; the sequence is QKVLLRRLASPQI. The helical transmembrane segment at 191–211 threads the bilayer; sequence LFLLYTLCTIALFPLAKPGVI. Residues 212-216 are Periplasmic-facing; it reads AQLSH. The helical transmembrane segment at 217 to 237 threads the bilayer; the sequence is WQLACLIFCGLNTLVGYGALA. The Cytoplasmic portion of the chain corresponds to 238-249; it reads EAMARWQAAQVS. A helical membrane pass occupies residues 250–270; the sequence is AIITLTPLFTLFFSDLLSLAW. Over 271–278 the chain is Periplasmic; sequence PDFFARPM. A helical transmembrane segment spans residues 279–299; it reads LNLLGYLGAFVVVAGAMYSAI. The Cytoplasmic portion of the chain corresponds to 300–321; that stretch reads GHRIWGGLRKHTTVVSQPRAGE.

The protein belongs to the EamA transporter family.

The protein localises to the cell inner membrane. This is an uncharacterized protein from Escherichia coli O157:H7.